Reading from the N-terminus, the 485-residue chain is E-selectin (485 aa).

Positions 1-22 (MIVSQYLSALTFVLLLFKESRT) are cleaved as a signal peptide. The C-type lectin domain occupies 23 to 140 (WSYHASTEMM…CTKQKLALCY (118 aa)). Over 23 to 430 (WSYHASTEMM…CEAPTVSQTP (408 aa)) the chain is Extracellular. Cystine bridges form between Cys-41–Cys-139, Cys-112–Cys-131, Cys-144–Cys-155, Cys-149–Cys-164, Cys-166–Cys-175, Cys-181–Cys-224, Cys-194–Cys-206, Cys-210–Cys-237, Cys-242–Cys-286, Cys-255–Cys-268, Cys-272–Cys-299, Cys-304–Cys-349, Cys-335–Cys-362, Cys-367–Cys-408, and Cys-394–Cys-421. Residues Asn-61, Asn-79, and Asn-88 are each glycosylated (N-linked (GlcNAc...) asparagine). Ca(2+) contacts are provided by Glu-102, Asn-104, and Glu-110. A carbohydrate contacts are provided by residues 102–110 (EPNNKQSDE), 114–119 (EIYIKR), and 127–129 (NDE). Residues Asn-127 and Asp-128 each contribute to the Ca(2+) site. Residues 141 to 176 (KAACNPTPCGSHGECVETINNYTCQCHPGFKGLKCE) enclose the EGF-like domain. Residue Asn-161 is glycosylated (N-linked (GlcNAc...) asparagine). Sushi domains lie at 179–239 (VTCP…KCNV), 240–301 (VKCD…TCKA), 302–364 (VSCA…VCEV), and 365–423 (VRCS…TCEA). Asn-203 is a glycosylation site (N-linked (GlcNAc...) asparagine). An N-linked (GlcNAc...) asparagine glycan is attached at Asn-265. 2 N-linked (GlcNAc...) asparagine glycosylation sites follow: Asn-312 and Asn-316. Residues Asn-379 and Asn-401 are each glycosylated (N-linked (GlcNAc...) asparagine). A helical membrane pass occupies residues 431–453 (LAVGLSTAGVSLVTIPSFLFWLL). At 454–485 (KRLQKKAKKFSPASSCSSLKSNGCYSTPSKLI) the chain is on the cytoplasmic side. Positions 466-485 (ASSCSSLKSNGCYSTPSKLI) are disordered.

Belongs to the selectin/LECAM family. In terms of assembly, interacts with SELPLG/PSGL1 and PODXL2 through the sialyl Lewis X epitope. SELPLG sulfation appears not to be required for this interaction.

It is found in the cell membrane. Functionally, cell-surface glycoprotein having a role in immunoadhesion. Mediates in the adhesion of blood neutrophils in cytokine-activated endothelium through interaction with SELPLG/PSGL1. May have a role in capillary morphogenesis. The polypeptide is E-selectin (SELE) (Bos taurus (Bovine)).